The sequence spans 472 residues: Replicative helicase loading/DNA remodeling protein DnaB (472 aa).

A DDBH1 region spans residues 1–112; sequence MADYWKDVLP…ERLFIYELLP (112 aa). Residues 210–302 are DDBH2-1; sequence DLFLAGLSET…VHLREGEQPA (93 aa). Residues 303 to 411 form a DDBH2-2 region; that stretch reads EEDSLDGKLI…RQYLEWAEGK (109 aa). Residues 415 to 472 form a disordered region; the sequence is SKRNQKVIREEKLPDWMTEKETASDSESGQQKLHPQDLEEQKKKMMEEMQKLKKYSAY. 2 stretches are compositionally biased toward basic and acidic residues: residues 421-437 and 448-465; these read VIREEKLPDWMTEKETA and HPQDLEEQKKKMMEEMQK.

Belongs to the DnaB/DnaD family. In terms of assembly, homotetramer. Also forms higher-order oligomers, can be induced by some ssDNA. The DNA replisome assembles sequentially on oriC in this order; DnaA, DnaD, DnaB, DnaI-DnaC helicase. In atomic force microscopy forms a square with a small central hole. Part of the replication restart primosome which assembles in this order; PriA, DnaD then DnaB. The preferred DNA substrate mimics an arrested DNA replication fork with unreplicated lagging strand. Interacts with DnaC, but probably not as a tetramer. Interacts with DnaD but no interaction with PriA was seen. Interacts with cell cycle regulator CcrZ. Post-translationally, in early growth phase only full-length protein is detected, during late growth and stationary phase full-length and C-terminally truncated proteins are seen (at protein level). Truncated protein is only seen in cytoplasmic fractions.

It localises to the cytoplasm. It is found in the cell membrane. Its function is as follows. Helps DnaI load the DnaC replicative helicase onto single-stranded (ss)DNA. During DNA replication from the origin of replication (oriC) in the DNA replisome, DnaD is required after DnaA, before DnaB and before subsequent helicase DnaC loading. Component of the replication restart primosome, which reloads the replicative helicase on sites other than oriC. DnaB, DnaD and DnaI may also be required for a PriA-independent pathway of replication fork restart. DnaB and DnaD work together to allow DnaB access to ssDNA. DNA replication at oriC might originate on the inner face of the cell membrane; DnaB is essential for both replication initiation and cell membrane attachment of the origin region of the chromosome and plasmids. Weakly binds ssDNA, preferentially binds double-stranded (ds)DNA, and replication fork-like substrates. Remodels DNA, laterally compacts supercoiled plasmid and linear DNA, forms beads along the dsDNA. Together DnaB and DnaD form bipolar complexes on plasmid DNA. DnaB and DnaD are also required to load helicase on the repN plasmid origin of replication (oriN). This chain is Replicative helicase loading/DNA remodeling protein DnaB, found in Bacillus subtilis (strain 168).